The sequence spans 417 residues: Signal recognition particle receptor FtsY (417 aa).

GTP contacts are provided by residues 228 to 235 (GINGTGKT), 310 to 314 (DTAGR), and 368 to 371 (TKID).

It belongs to the GTP-binding SRP family. FtsY subfamily. Part of the signal recognition particle protein translocation system, which is composed of SRP and FtsY.

It localises to the cell membrane. The protein localises to the cytoplasm. It catalyses the reaction GTP + H2O = GDP + phosphate + H(+). Involved in targeting and insertion of nascent membrane proteins into the cytoplasmic membrane. Acts as a receptor for the complex formed by the signal recognition particle (SRP) and the ribosome-nascent chain (RNC). The chain is Signal recognition particle receptor FtsY from Methanosarcina acetivorans (strain ATCC 35395 / DSM 2834 / JCM 12185 / C2A).